We begin with the raw amino-acid sequence, 116 residues long: Ribonuclease P protein component (116 aa).

The protein belongs to the RnpA family. As to quaternary structure, consists of a catalytic RNA component (M1 or rnpB) and a protein subunit.

It carries out the reaction Endonucleolytic cleavage of RNA, removing 5'-extranucleotides from tRNA precursor.. RNaseP catalyzes the removal of the 5'-leader sequence from pre-tRNA to produce the mature 5'-terminus. It can also cleave other RNA substrates such as 4.5S RNA. The protein component plays an auxiliary but essential role in vivo by binding to the 5'-leader sequence and broadening the substrate specificity of the ribozyme. The sequence is that of Ribonuclease P protein component from Thermoanaerobacter pseudethanolicus (strain ATCC 33223 / 39E) (Clostridium thermohydrosulfuricum).